The chain runs to 860 residues: Leucine--tRNA ligase (860 aa).

The short motif at 42 to 52 is the 'HIGH' region element; it reads PYPSGRLHMGH. Residues 619–623 carry the 'KMSKS' region motif; that stretch reads KMSKS. Residue Lys-622 coordinates ATP.

The protein belongs to the class-I aminoacyl-tRNA synthetase family.

Its subcellular location is the cytoplasm. The enzyme catalyses tRNA(Leu) + L-leucine + ATP = L-leucyl-tRNA(Leu) + AMP + diphosphate. The protein is Leucine--tRNA ligase of Salmonella paratyphi B (strain ATCC BAA-1250 / SPB7).